The primary structure comprises 34 residues: MEVNILAFIATALFILVPTAFLLIIYVKTVSQSD.

The chain crosses the membrane as a helical span at residues 5–25 (ILAFIATALFILVPTAFLLII).

This sequence belongs to the PsbM family. In terms of assembly, PSII is composed of 1 copy each of membrane proteins PsbA, PsbB, PsbC, PsbD, PsbE, PsbF, PsbH, PsbI, PsbJ, PsbK, PsbL, PsbM, PsbT, PsbX, PsbY, PsbZ, Psb30/Ycf12, at least 3 peripheral proteins of the oxygen-evolving complex and a large number of cofactors. It forms dimeric complexes.

It is found in the plastid. The protein localises to the chloroplast thylakoid membrane. In terms of biological role, one of the components of the core complex of photosystem II (PSII). PSII is a light-driven water:plastoquinone oxidoreductase that uses light energy to abstract electrons from H(2)O, generating O(2) and a proton gradient subsequently used for ATP formation. It consists of a core antenna complex that captures photons, and an electron transfer chain that converts photonic excitation into a charge separation. This subunit is found at the monomer-monomer interface. The polypeptide is Photosystem II reaction center protein M (Calycanthus floridus var. glaucus (Eastern sweetshrub)).